A 416-amino-acid polypeptide reads, in one-letter code: Tyrosine--tRNA ligase (416 aa).

Y40 serves as a coordination point for L-tyrosine. A 'HIGH' region motif is present at residues 45–54 (ATAASLHVGH). Positions 177 and 181 each coordinate L-tyrosine. A 'KMSKS' region motif is present at residues 237 to 241 (KMGKS). ATP is bound at residue K240. Residues 351 to 416 (LSVAHFLVAA…RKKHKLVRLS (66 aa)) enclose the S4 RNA-binding domain.

The protein belongs to the class-I aminoacyl-tRNA synthetase family. TyrS type 1 subfamily. Homodimer.

The protein resides in the cytoplasm. The catalysed reaction is tRNA(Tyr) + L-tyrosine + ATP = L-tyrosyl-tRNA(Tyr) + AMP + diphosphate + H(+). In terms of biological role, catalyzes the attachment of tyrosine to tRNA(Tyr) in a two-step reaction: tyrosine is first activated by ATP to form Tyr-AMP and then transferred to the acceptor end of tRNA(Tyr). This chain is Tyrosine--tRNA ligase, found in Cereibacter sphaeroides (strain ATCC 17029 / ATH 2.4.9) (Rhodobacter sphaeroides).